Reading from the N-terminus, the 165-residue chain is Nucleotide-binding protein Chy400_2003 (165 aa).

It belongs to the YajQ family.

Nucleotide-binding protein. This is Nucleotide-binding protein Chy400_2003 from Chloroflexus aurantiacus (strain ATCC 29364 / DSM 637 / Y-400-fl).